The sequence spans 79 residues: uncharacterized protein (79 aa).

The N-terminal stretch at 1 to 18 (MQIKNIVAVLATVTAINA) is a signal peptide. Residues 24–44 (PNATTPNATQPNATQPNTTLP) form a disordered region. Asn-25, Asn-30, Asn-35, and Asn-40 each carry an N-linked (GlcNAc...) asparagine glycan. Residue Gly-55 is the site of GPI-anchor amidated glycine attachment. A propeptide spans 56–79 (EAVVNTMAAGAFGAAIAAGVAFLF) (removed in mature form).

It is found in the cell membrane. This is an uncharacterized protein from Saccharomyces cerevisiae (strain ATCC 204508 / S288c) (Baker's yeast).